We begin with the raw amino-acid sequence, 1051 residues long: Anucleate primary sterigmata protein B (1051 aa).

Coiled-coil stretches lie at residues 10 to 200 and 239 to 285; these read IDRL…YAIA and STLV…ELKL. Residues 58 to 90 are compositionally biased toward basic and acidic residues; sequence KDNQGLKRKIRDLEKQLKDQQSDKESMLNHDPE. Disordered regions lie at residues 58 to 100 and 141 to 160; these read KDNQ…DRDH and LKSLNDGRPTGSDSGAREER. Positions 294–303 are enriched in basic and acidic residues; the sequence is AGDSILDRSA. 4 disordered regions span residues 294–329, 877–902, 909–928, and 984–1051; these read AGDSILDRSASRAQGRPSSSISDRTGQSPIDDAERE, NHPRSRSTTAGVAGSPQSSTIDLAER, NTAAESPARSSIPQPAQMTN, and EERD…DIEV. Over residues 309–321 the composition is skewed to polar residues; sequence RPSSSISDRTGQS. Coiled coils occupy residues 325 to 743 and 787 to 878; these read DAER…RNSM and RNLL…LQNH. 2 stretches are compositionally biased toward polar residues: residues 877-897 and 916-928; these read NHPRSRSTTAGVAGSPQSSTI and ARSSIPQPAQMTN. Residues 950 to 1004 are a coiled coil; the sequence is NQEVWIKRLHELERRLKAEREARLLDRNGARRRLEERDAENKRLRAQLDRQRLRQ. 2 stretches are compositionally biased toward basic and acidic residues: residues 984-1001 and 1028-1040; these read EERDAENKRLRAQLDRQR and EGYREREEEHSSS.

The protein localises to the cytoplasm. Its function is as follows. Involved in regulation of nuclear migration. May be involved in regulating nuclear positioning. In Emericella nidulans (strain FGSC A4 / ATCC 38163 / CBS 112.46 / NRRL 194 / M139) (Aspergillus nidulans), this protein is Anucleate primary sterigmata protein B (apsB).